Consider the following 284-residue polypeptide: HTH-type transcriptional activator RhaR (284 aa).

Residues 181–279 (DMLMNALRAS…GVSPSAYRQR (99 aa)) enclose the HTH araC/xylS-type domain. 2 consecutive DNA-binding regions (H-T-H motif) follow at residues 198–219 (EAFC…KEQT) and 246–269 (IGDV…HQAF).

As to quaternary structure, binds DNA as a dimer.

Its subcellular location is the cytoplasm. In terms of biological role, activates expression of the rhaSR operon in response to L-rhamnose. The polypeptide is HTH-type transcriptional activator RhaR (Pectobacterium atrosepticum (strain SCRI 1043 / ATCC BAA-672) (Erwinia carotovora subsp. atroseptica)).